Reading from the N-terminus, the 457-residue chain is COBRA-like protein 3 (457 aa).

The first 35 residues, 1–35 (MAVGGAGSSRSVAPCCCCAVLLAAALLFSAPATTE), serve as a signal peptide directing secretion. Residues asparagine 45, asparagine 170, asparagine 178, asparagine 217, asparagine 242, asparagine 258, asparagine 326, asparagine 341, and asparagine 361 are each glycosylated (N-linked (GlcNAc...) asparagine). Asparagine 430 is lipidated: GPI-anchor amidated asparagine. The propeptide at 431 to 457 (ASPLTKQPLTLSVLVFSIVLATLLAYA) is removed in mature form. Residues 437–457 (QPLTLSVLVFSIVLATLLAYA) form a helical membrane-spanning segment.

Belongs to the COBRA family.

Its subcellular location is the cell membrane. Functionally, involved in determining the orientation of cell expansion, probably by playing an important role in cellulose deposition. May act by recruiting cellulose synthesizing complexes to discrete positions on the cell surface. The chain is COBRA-like protein 3 (BC1L4) from Oryza sativa subsp. japonica (Rice).